Here is a 260-residue protein sequence, read N- to C-terminus: Imidazole glycerol phosphate synthase subunit HisF (260 aa).

Active-site residues include Asp-11 and Asp-130.

This sequence belongs to the HisA/HisF family. In terms of assembly, heterodimer of HisH and HisF.

Its subcellular location is the cytoplasm. It carries out the reaction 5-[(5-phospho-1-deoxy-D-ribulos-1-ylimino)methylamino]-1-(5-phospho-beta-D-ribosyl)imidazole-4-carboxamide + L-glutamine = D-erythro-1-(imidazol-4-yl)glycerol 3-phosphate + 5-amino-1-(5-phospho-beta-D-ribosyl)imidazole-4-carboxamide + L-glutamate + H(+). It functions in the pathway amino-acid biosynthesis; L-histidine biosynthesis; L-histidine from 5-phospho-alpha-D-ribose 1-diphosphate: step 5/9. Functionally, IGPS catalyzes the conversion of PRFAR and glutamine to IGP, AICAR and glutamate. The HisF subunit catalyzes the cyclization activity that produces IGP and AICAR from PRFAR using the ammonia provided by the HisH subunit. This is Imidazole glycerol phosphate synthase subunit HisF from Desulfatibacillum aliphaticivorans.